A 66-amino-acid chain; its full sequence is Phylloseptin-H7 (66 aa).

An N-terminal signal peptide occupies residues 1–22 (MAFLKKSLFLVLFLGLVSLSIC). A propeptide spanning residues 23 to 44 (EEEKRETEEEENDQEEDDKSEE) is cleaved from the precursor. A disordered region spans residues 25-44 (EKRETEEEENDQEEDDKSEE). Acidic residues predominate over residues 30 to 41 (EEEENDQEEDDK). Leu-65 carries the post-translational modification Leucine amide.

Expressed by the skin glands.

Its subcellular location is the secreted. Its function is as follows. Has antimicrobial activity. The sequence is that of Phylloseptin-H7 from Pithecopus hypochondrialis (Orange-legged leaf frog).